We begin with the raw amino-acid sequence, 434 residues long: Nicotinate phosphoribosyltransferase (434 aa).

A Phosphohistidine; by autocatalysis modification is found at His-242.

This sequence belongs to the NAPRTase family. Transiently phosphorylated on a His residue during the reaction cycle. Phosphorylation strongly increases the affinity for substrates and increases the rate of nicotinate D-ribonucleotide production. Dephosphorylation regenerates the low-affinity form of the enzyme, leading to product release.

It carries out the reaction nicotinate + 5-phospho-alpha-D-ribose 1-diphosphate + ATP + H2O = nicotinate beta-D-ribonucleotide + ADP + phosphate + diphosphate. Its pathway is cofactor biosynthesis; NAD(+) biosynthesis; nicotinate D-ribonucleotide from nicotinate: step 1/1. Its function is as follows. Catalyzes the synthesis of beta-nicotinate D-ribonucleotide from nicotinate and 5-phospho-D-ribose 1-phosphate at the expense of ATP. This Bartonella quintana (strain Toulouse) (Rochalimaea quintana) protein is Nicotinate phosphoribosyltransferase.